Consider the following 647-residue polypeptide: Zinc finger protein 567 (647 aa).

Residues 32 to 77 (MDVMLENYCHLISVGCHMTKPDVILKLERGEEPWTSFKGHTCLEEN) form the KRAB domain. Glycyl lysine isopeptide (Lys-Gly) (interchain with G-Cter in SUMO2) cross-links involve residues lysine 173, lysine 202, and lysine 217. The segment at 210-232 (FEYNDCEKAFLKRGGPVTHSRTY) adopts a C2H2-type 1; degenerate zinc-finger fold. 7 C2H2-type zinc fingers span residues 253–275 (HTCT…QGIH), 281–303 (YQCH…QRTH), 309–331 (FVCN…QRTH), 337–359 (YECP…QRTH), 365–387 (YECS…QRIH), 393–415 (YICK…QRTH), and 421–443 (YICN…EKTH). Residue lysine 447 forms a Glycyl lysine isopeptide (Lys-Gly) (interchain with G-Cter in SUMO2) linkage. 7 C2H2-type zinc fingers span residues 449–471 (YICN…QRTH), 477–499 (YECP…HRTH), 505–527 (YECN…QRIH), 533–555 (YICN…QKIH), 561–583 (YECP…QRTH), 589–611 (YKCS…QRTH), and 617–639 (YICN…QRTH).

It belongs to the krueppel C2H2-type zinc-finger protein family.

The protein localises to the nucleus. May be involved in transcriptional regulation. This Bos taurus (Bovine) protein is Zinc finger protein 567 (ZNF567).